The chain runs to 499 residues: Glycerol kinase (499 aa).

Thr-12 contributes to the ADP binding site. Positions 12, 13, and 14 each coordinate ATP. Position 12 (Thr-12) interacts with sn-glycerol 3-phosphate. An ADP-binding site is contributed by Arg-16. Sn-glycerol 3-phosphate contacts are provided by Arg-82, Glu-83, and Tyr-134. Residues Arg-82, Glu-83, and Tyr-134 each coordinate glycerol. A Phosphohistidine; by HPr modification is found at His-230. Asp-244 contacts sn-glycerol 3-phosphate. Residues Asp-244 and Gln-245 each contribute to the glycerol site. ADP-binding residues include Thr-266 and Gly-309. ATP-binding residues include Thr-266, Gly-309, Gln-313, and Gly-410. Positions 410 and 414 each coordinate ADP.

It belongs to the FGGY kinase family. In terms of assembly, homotetramer and homodimer (in equilibrium). In terms of processing, the phosphoenolpyruvate-dependent sugar phosphotransferase system (PTS), including enzyme I, and histidine-containing protein (HPr) are required for the phosphorylation, which leads to the activation of the enzyme.

It carries out the reaction glycerol + ATP = sn-glycerol 3-phosphate + ADP + H(+). The protein operates within polyol metabolism; glycerol degradation via glycerol kinase pathway; sn-glycerol 3-phosphate from glycerol: step 1/1. With respect to regulation, activated by phosphorylation and inhibited by fructose 1,6-bisphosphate (FBP). Key enzyme in the regulation of glycerol uptake and metabolism. Catalyzes the phosphorylation of glycerol to yield sn-glycerol 3-phosphate. The sequence is that of Glycerol kinase from Staphylococcus epidermidis (strain ATCC 12228 / FDA PCI 1200).